Here is a 420-residue protein sequence, read N- to C-terminus: Cytochrome c biogenesis protein Ccs1 (420 aa).

3 helical membrane passes run 12–32 (LRFS…GTVI), 71–91 (TWWF…CTFL), and 157–177 (IAPI…IVGS).

This sequence belongs to the Ccs1/CcsB family. In terms of assembly, may interact with CcsA.

It localises to the plastid. It is found in the chloroplast thylakoid membrane. In terms of biological role, required during biogenesis of c-type cytochromes (cytochrome c6 and cytochrome f) at the step of heme attachment. The chain is Cytochrome c biogenesis protein Ccs1 from Phaeodactylum tricornutum (strain CCAP 1055/1).